The sequence spans 121 residues: Large ribosomal subunit protein uL14 (121 aa).

It belongs to the universal ribosomal protein uL14 family. Part of the 50S ribosomal subunit. Forms a cluster with proteins L3 and L19. In the 70S ribosome, L14 and L19 interact and together make contacts with the 16S rRNA in bridges B5 and B8.

In terms of biological role, binds to 23S rRNA. Forms part of two intersubunit bridges in the 70S ribosome. This chain is Large ribosomal subunit protein uL14, found in Synechococcus sp. (strain CC9605).